The following is a 445-amino-acid chain: MARLFGTDGVRGVANRELTPELAMALGSAAARRLGRAGATRRRVAVVGRDPRASGEMLEAAVIAGIAGEGVDTLRVGILPTPAVAYLTSAYDADFGVMISASHNPMPDNGIKIFGPGGHKLDDATEDRIEELVHQGPGERPTGAGIGRVVDAEDALERYLRHVGKAATTRLDPLTVVVDCAHGAASVAAPRAYRAAGANVIPIHADPDGLNINDGCGSTHMESLRSAVVSYGADLGLAHDGDADRCLAVDAHGRVIDGDAIMVVLALAMQQSGELVSDTLVATVMSNMGLHLAMRSADIEVRTTGVGDRYVLEELRAGQFSLGGEQSGHIVLPSFGTTGDGIVTGLRLMARMAQTGRSLADLAQPMQTLPQVLINVEVADKTTVADAPSVRDAVAQVEAELGDTGRILLRPSGTEQVVRVMVEAADEDTARQMAVRVADSVSAES.

The active-site Phosphoserine intermediate is serine 102. The Mg(2+) site is built by serine 102, aspartate 240, aspartate 242, and aspartate 244. Serine 102 carries the phosphoserine modification.

It belongs to the phosphohexose mutase family. Requires Mg(2+) as cofactor. Activated by phosphorylation.

The catalysed reaction is alpha-D-glucosamine 1-phosphate = D-glucosamine 6-phosphate. Functionally, catalyzes the conversion of glucosamine-6-phosphate to glucosamine-1-phosphate. The protein is Phosphoglucosamine mutase of Mycolicibacterium gilvum (strain PYR-GCK) (Mycobacterium gilvum (strain PYR-GCK)).